The chain runs to 358 residues: Mesaconyl-CoA hydratase (358 aa).

This sequence belongs to the enoyl-CoA hydratase/isomerase family. As to quaternary structure, homodimer.

It catalyses the reaction (2R,3S)-beta-methylmalyl-CoA = 2-methylfumaryl-CoA + H2O. Shows highest activity at 0.5 M KCl. Does not require divalent ions for activity. In terms of biological role, involved in the methylaspartate cycle. Catalyzes the reversible hydration of mesaconyl-CoA (2-methylfumaryl-CoA) to yield beta-methylmalyl-CoA ((2R,3S)-beta-methylmalyl-CoA). Also shows activity with mesaconyl-C4-CoA (3-methylfumaryl-CoA), (S)-citramalyl-CoA and (S)-malyl-CoA. This chain is Mesaconyl-CoA hydratase, found in Haloarcula hispanica (strain ATCC 33960 / DSM 4426 / JCM 8911 / NBRC 102182 / NCIMB 2187 / VKM B-1755).